Consider the following 155-residue polypeptide: Peptide methionine sulfoxide reductase MsrB (155 aa).

The MsrB domain maps to 15 to 137; sequence REALIATLNA…NSVSLTFIPT (123 aa). Residues cysteine 54, cysteine 57, cysteine 103, and cysteine 106 each coordinate Zn(2+). The Nucleophile role is filled by cysteine 126.

This sequence belongs to the MsrB Met sulfoxide reductase family. Zn(2+) is required as a cofactor.

The catalysed reaction is L-methionyl-[protein] + [thioredoxin]-disulfide + H2O = L-methionyl-(R)-S-oxide-[protein] + [thioredoxin]-dithiol. The sequence is that of Peptide methionine sulfoxide reductase MsrB from Xylella fastidiosa (strain 9a5c).